Here is a 529-residue protein sequence, read N- to C-terminus: Pre-rRNA-processing protein pro-1 (529 aa).

WD repeat units lie at residues Ala136 to Arg175 and Gly287 to Val326. Residues Ala416 to Glu518 adopt a coiled-coil conformation. Residues Thr436 to Phe470 form a disordered region. Residues Gln450–Gln465 show a composition bias toward basic residues.

The protein belongs to the WD repeat IPI3/WDR18 family. As to quaternary structure, component of the PELP1 complex, composed of at least PELP1, TEX10 and WDR18. The complex interacts with pre-60S ribosome particles.

It localises to the nucleus. The protein localises to the nucleolus. The protein resides in the nucleoplasm. Component of the PELP1 complex involved in the nucleolar steps of 28S rRNA maturation and the subsequent nucleoplasmic transit of the pre-60S ribosomal subunit. Required for processing ITS2 sequences from rRNA intermediates during 26S rRNA maturation. Required in the soma to promote normal proliferation and prevent germline tumor formation. This chain is Pre-rRNA-processing protein pro-1, found in Caenorhabditis elegans.